We begin with the raw amino-acid sequence, 163 residues long: ATP synthase subunit b' (163 aa).

The helical transmembrane segment at 28–45 (LMAIQFLLLALILNATLY) threads the bilayer.

It belongs to the ATPase B chain family. In terms of assembly, F-type ATPases have 2 components, F(1) - the catalytic core - and F(0) - the membrane proton channel. F(1) has five subunits: alpha(3), beta(3), gamma(1), delta(1), epsilon(1). F(0) has four main subunits: a(1), b(1), b'(1) and c(10-14). The alpha and beta chains form an alternating ring which encloses part of the gamma chain. F(1) is attached to F(0) by a central stalk formed by the gamma and epsilon chains, while a peripheral stalk is formed by the delta, b and b' chains.

It localises to the cellular thylakoid membrane. F(1)F(0) ATP synthase produces ATP from ADP in the presence of a proton or sodium gradient. F-type ATPases consist of two structural domains, F(1) containing the extramembraneous catalytic core and F(0) containing the membrane proton channel, linked together by a central stalk and a peripheral stalk. During catalysis, ATP synthesis in the catalytic domain of F(1) is coupled via a rotary mechanism of the central stalk subunits to proton translocation. In terms of biological role, component of the F(0) channel, it forms part of the peripheral stalk, linking F(1) to F(0). The b'-subunit is a diverged and duplicated form of b found in plants and photosynthetic bacteria. In Nostoc sp. (strain PCC 7120 / SAG 25.82 / UTEX 2576), this protein is ATP synthase subunit b'.